The primary structure comprises 563 residues: Arylsulfatase K (563 aa).

The signal sequence occupies residues 1–17 (MLLLLVSVIVALALVAP). Ca(2+) is bound by residues Asp40 and Cys80. The active-site Nucleophile is the Cys80. Cys80 is subject to 3-oxoalanine (Cys). Residue Asn108 is glycosylated (N-linked (GlcNAc...) asparagine). Lys128 provides a ligand contact to substrate. Asn191 carries an N-linked (GlcNAc...) asparagine glycan. A substrate-binding site is contributed by His249. N-linked (GlcNAc...) asparagine glycosylation occurs at Asn260. Residues Asp311 and His312 each contribute to the Ca(2+) site. Asn373, Asn411, and Asn496 each carry an N-linked (GlcNAc...) asparagine glycan.

Belongs to the sulfatase family. The cofactor is Ca(2+). Post-translationally, the conversion to 3-oxoalanine (also known as C-formylglycine, FGly), of a serine or cysteine residue in prokaryotes and of a cysteine residue in eukaryotes, is critical for catalytic activity. The 75-kDa precursor undergoes proteolytic processing to yield a 23 kDa form. In terms of processing, N-glycosylated with both high mannose and complex type sugars.

It localises to the secreted. Its subcellular location is the lysosome. It carries out the reaction an aryl sulfate + H2O = a phenol + sulfate + H(+). The catalysed reaction is Hydrolysis of the 2-sulfate groups of the 2-O-sulfo-D-glucuronate residues of chondroitin sulfate, heparin and heparitin sulfate.. Its function is as follows. Catalyzes the hydrolysis of pseudosubstrates such as p-nitrocatechol sulfate and p-nitrophenyl sulfate. Catalyzes the hydrolysis of the 2-sulfate groups of the 2-O-sulfo-D-glucuronate residues of chondroitin sulfate, heparin and heparitin sulfate. Acts selectively on 2-sulfoglucuronate and lacks activity against 2-sulfoiduronate. The polypeptide is Arylsulfatase K (Arsk) (Rattus norvegicus (Rat)).